The sequence spans 464 residues: ATP synthase subunit beta (464 aa).

Position 150–157 (150–157 (GGAGVGKT)) interacts with ATP.

This sequence belongs to the ATPase alpha/beta chains family. As to quaternary structure, F-type ATPases have 2 components, CF(1) - the catalytic core - and CF(0) - the membrane proton channel. CF(1) has five subunits: alpha(3), beta(3), gamma(1), delta(1), epsilon(1). CF(0) has three main subunits: a(1), b(2) and c(9-12). The alpha and beta chains form an alternating ring which encloses part of the gamma chain. CF(1) is attached to CF(0) by a central stalk formed by the gamma and epsilon chains, while a peripheral stalk is formed by the delta and b chains.

The protein resides in the cell membrane. The enzyme catalyses ATP + H2O + 4 H(+)(in) = ADP + phosphate + 5 H(+)(out). Functionally, produces ATP from ADP in the presence of a proton gradient across the membrane. The catalytic sites are hosted primarily by the beta subunits. This Dehalococcoides mccartyi (strain ATCC BAA-2100 / JCM 16839 / KCTC 5957 / BAV1) protein is ATP synthase subunit beta.